Consider the following 138-residue polypeptide: MKPAPGAEPVRMYKSPYGGKYGVWRLADCVPMRAKRPQTEKQRLASTRLGLQARMKSERGRFAMLAHTWLALGPVFLDTETTGLDAGAQALEIGLVNARGERIFETRLKPTVGIDPAAAAVQIVTEPYRFPVLSVRLA.

To phage 186 CP81.

This is an uncharacterized protein from Salmonella typhimurium (strain LT2 / SGSC1412 / ATCC 700720).